We begin with the raw amino-acid sequence, 671 residues long: Alpha-1,4-glucan:maltose-1-phosphate maltosyltransferase (671 aa).

The alpha-maltose 1-phosphate site is built by Lys-252, Gln-312, and Asp-347. Asp-382 functions as the Nucleophile in the catalytic mechanism. Asn-383 lines the alpha-maltose 1-phosphate pocket. Catalysis depends on Glu-411, which acts as the Proton donor. 521–522 (KY) provides a ligand contact to alpha-maltose 1-phosphate.

This sequence belongs to the glycosyl hydrolase 13 family. GlgE subfamily. As to quaternary structure, homodimer.

The enzyme catalyses alpha-maltose 1-phosphate + [(1-&gt;4)-alpha-D-glucosyl](n) = [(1-&gt;4)-alpha-D-glucosyl](n+2) + phosphate. Functionally, maltosyltransferase that uses maltose 1-phosphate (M1P) as the sugar donor to elongate linear or branched alpha-(1-&gt;4)-glucans. Is involved in a branched alpha-glucan biosynthetic pathway from trehalose, together with TreS, Mak and GlgB. This chain is Alpha-1,4-glucan:maltose-1-phosphate maltosyltransferase, found in Corynebacterium pseudotuberculosis (strain 1002).